Reading from the N-terminus, the 374-residue chain is Muconate cycloisomerase 1 (374 aa).

The protein belongs to the cycloisomerase 2 family. Homotetramer.

It carries out the reaction (S)-muconolactone = cis,cis-muconate + H(+). It functions in the pathway aromatic compound metabolism; beta-ketoadipate pathway; 5-oxo-4,5-dihydro-2-furylacetate from catechol: step 2/3. Its function is as follows. Catalyzes a syn cycloisomerization. This chain is Muconate cycloisomerase 1, found in Cutaneotrichosporon cutaneum (Yeast).